The following is a 666-amino-acid chain: Tripartite terminase subunit 3 (666 aa).

The Walker A motif signature appears at 208-215 (VPRRHGKT). Residues 300-305 (LLIVDE) carry the Walker B motif motif. Catalysis depends on glutamate 305, which acts as the For ATPase activity. Residues aspartate 458, glutamate 529, and aspartate 643 each act as for nuclease activity in the active site.

It belongs to the herpesviridae TRM3 protein family. In terms of assembly, interacts with the terminase subunits TRM1 and TRM2. Interacts with portal protein.

The protein resides in the host nucleus. Functionally, component of the molecular motor that translocates viral genomic DNA in empty capsid during DNA packaging. Forms a tripartite terminase complex together with TRM1 and TRM2 in the host cytoplasm. Once the complex reaches the host nucleus, it interacts with the capsid portal vertex. This portal forms a ring in which genomic DNA is translocated into the capsid. TRM3 carries an RNase H-like nuclease activity that plays an important role for the cleavage of concatemeric viral DNA into unit length genomes. The polypeptide is Tripartite terminase subunit 3 (Homo sapiens (Human)).